Here is a 130-residue protein sequence, read N- to C-terminus: Large ribosomal subunit protein bL19 (130 aa).

Belongs to the bacterial ribosomal protein bL19 family.

This protein is located at the 30S-50S ribosomal subunit interface and may play a role in the structure and function of the aminoacyl-tRNA binding site. The protein is Large ribosomal subunit protein bL19 of Cupriavidus taiwanensis (strain DSM 17343 / BCRC 17206 / CCUG 44338 / CIP 107171 / LMG 19424 / R1) (Ralstonia taiwanensis (strain LMG 19424)).